The sequence spans 593 residues: A-type ATP synthase subunit A (593 aa).

236–243 (GPFGSGKT) serves as a coordination point for ATP.

It belongs to the ATPase alpha/beta chains family. As to quaternary structure, has multiple subunits with at least A(3), B(3), C, D, E, F, H, I and proteolipid K(x).

The protein resides in the cell membrane. The enzyme catalyses ATP + H2O + 4 H(+)(in) = ADP + phosphate + 5 H(+)(out). Its function is as follows. Component of the A-type ATP synthase that produces ATP from ADP in the presence of a proton gradient across the membrane. The A chain is the catalytic subunit. This chain is A-type ATP synthase subunit A, found in Pyrobaculum arsenaticum (strain DSM 13514 / JCM 11321 / PZ6).